We begin with the raw amino-acid sequence, 431 residues long: Adenylosuccinate synthetase (431 aa).

Residues 12–18 (GDEGKGK) and 40–42 (GHS) contribute to the GTP site. The active-site Proton acceptor is Asp-13. Mg(2+) contacts are provided by Asp-13 and Gly-40. Residues 13–16 (DEGK) and 38–41 (NAGH) contribute to the IMP site. Residue His-41 is the Proton donor of the active site. The tract at residues 114–133 (QQQERDRSKNGEKIGTTNKG) is disordered. Residues 115-125 (QQERDRSKNGE) show a composition bias toward basic and acidic residues. Positions 130, 144, 225, 240, and 304 each coordinate IMP. Substrate is bound at residue 300 to 306 (TVTKRPR). GTP is bound by residues Arg-306, 332-334 (CLD), and 414-416 (SIG).

The protein belongs to the adenylosuccinate synthetase family. Homodimer. The cofactor is Mg(2+).

It localises to the cytoplasm. The catalysed reaction is IMP + L-aspartate + GTP = N(6)-(1,2-dicarboxyethyl)-AMP + GDP + phosphate + 2 H(+). It participates in purine metabolism; AMP biosynthesis via de novo pathway; AMP from IMP: step 1/2. Functionally, plays an important role in the de novo pathway of purine nucleotide biosynthesis. Catalyzes the first committed step in the biosynthesis of AMP from IMP. In Pediococcus pentosaceus (strain ATCC 25745 / CCUG 21536 / LMG 10740 / 183-1w), this protein is Adenylosuccinate synthetase.